We begin with the raw amino-acid sequence, 32 residues long: Photosystem II reaction center protein T (32 aa).

A helical transmembrane segment spans residues 3–23 (TLVYTFLLIGTLAVLFAAVFF).

It belongs to the PsbT family. PSII is composed of 1 copy each of membrane proteins PsbA, PsbB, PsbC, PsbD, PsbE, PsbF, PsbH, PsbI, PsbJ, PsbK, PsbL, PsbM, PsbT, PsbX, PsbY, PsbZ, Psb30/Ycf12, at least 3 peripheral proteins of the oxygen-evolving complex and a large number of cofactors. It forms dimeric complexes.

Its subcellular location is the plastid. The protein resides in the chloroplast thylakoid membrane. Found at the monomer-monomer interface of the photosystem II (PS II) dimer, plays a role in assembly and dimerization of PSII. PSII is a light-driven water plastoquinone oxidoreductase, using light energy to abstract electrons from H(2)O, generating a proton gradient subsequently used for ATP formation. The protein is Photosystem II reaction center protein T of Guillardia theta (Cryptophyte).